A 163-amino-acid polypeptide reads, in one-letter code: uncharacterized protein (163 aa).

This is an uncharacterized protein from Methanocaldococcus jannaschii (strain ATCC 43067 / DSM 2661 / JAL-1 / JCM 10045 / NBRC 100440) (Methanococcus jannaschii).